A 226-amino-acid polypeptide reads, in one-letter code: ATP synthase subunit a (226 aa).

Helical transmembrane passes span 20 to 40 (LNWL…WLLP), 74 to 94 (FISL…PYIF), 100 to 120 (LTLT…YGWI), 158 to 180 (LAVR…GNTG), and 197 to 217 (IALL…FAVL).

Belongs to the ATPase A chain family. In terms of assembly, F-type ATPases have 2 components, CF(1) - the catalytic core - and CF(0) - the membrane proton channel. CF(1) has five subunits: alpha(3), beta(3), gamma(1), delta(1), epsilon(1). CF(0) has three main subunits: a, b and c.

It is found in the mitochondrion inner membrane. Functionally, mitochondrial membrane ATP synthase (F(1)F(0) ATP synthase or Complex V) produces ATP from ADP in the presence of a proton gradient across the membrane which is generated by electron transport complexes of the respiratory chain. F-type ATPases consist of two structural domains, F(1) - containing the extramembraneous catalytic core and F(0) - containing the membrane proton channel, linked together by a central stalk and a peripheral stalk. During catalysis, ATP synthesis in the catalytic domain of F(1) is coupled via a rotary mechanism of the central stalk subunits to proton translocation. Key component of the proton channel; it may play a direct role in the translocation of protons across the membrane. In Anopheles quadrimaculatus (Common malaria mosquito), this protein is ATP synthase subunit a (ATP6).